A 103-amino-acid chain; its full sequence is Large ribosomal subunit protein bL21 (103 aa).

It belongs to the bacterial ribosomal protein bL21 family. Part of the 50S ribosomal subunit. Contacts protein L20.

In terms of biological role, this protein binds to 23S rRNA in the presence of protein L20. This is Large ribosomal subunit protein bL21 from Nitrosospira multiformis (strain ATCC 25196 / NCIMB 11849 / C 71).